A 472-amino-acid chain; its full sequence is Relaxin-3 receptor 1 (472 aa).

Over 1-81 (MQVASATPAA…ESTDTEARVR (81 aa)) the chain is Extracellular. N-linked (GlcNAc...) asparagine glycosylation is found at N36 and N40. A helical transmembrane segment spans residues 82-102 (ILISAVYWVVCALGLAGNLLV). At 103–119 (LYLMKSKQGWRKSSINL) the chain is on the cytoplasmic side. The helical transmembrane segment at 120–140 (FVTNLALTDFQFVLTLPFWAV) threads the bilayer. Residues 141 to 156 (ENALDFKWPFGKAMCK) are Extracellular-facing. Residues C155 and C247 are joined by a disulfide bond. The chain crosses the membrane as a helical span at residues 157-177 (IVSMVTSMNMYASVFFLTAMS). Residues 178 to 215 (VARYHSVASALKSHRTRGRGRGDCCGQSLRESCCFSAK) are Cytoplasmic-facing. The chain crosses the membrane as a helical span at residues 216–236 (VLCGLIWASAALASLPNAIFS). The Extracellular portion of the chain corresponds to 237–270 (TTIRVLGEELCLMHFPDKLLGWDRQFWLGLYHLQ). The helical transmembrane segment at 271–291 (KVLLGFLLPLSIISLCYLLLV) threads the bilayer. At 292–298 (RFISDRR) the chain is on the cytoplasmic side. Residues 299-319 (VVGTTDAVGAAAAPGGGLSTA) traverse the membrane as a helical segment. Residues 320–332 (SARRRSKVTKSVT) lie on the Extracellular side of the membrane. A helical transmembrane segment spans residues 333-353 (IVVLSFFLCWLPNQALTTWSI). At 354–472 (LIKFNAVPFS…YDLLPSSSAY (119 aa)) the chain is on the cytoplasmic side.

Belongs to the G-protein coupled receptor 1 family.

The protein localises to the cell membrane. Functionally, receptor for RNL3/relaxin-3. Binding of the ligand inhibit cAMP accumulation. The chain is Relaxin-3 receptor 1 (Rxfp3) from Mus musculus (Mouse).